An 83-amino-acid chain; its full sequence is Translation initiation factor IF-1 (83 aa).

In terms of domain architecture, S1-like spans 1 to 72 (MAKEELIEMQ…SKGRITFRHL (72 aa)).

This sequence belongs to the IF-1 family. In terms of assembly, component of the 30S ribosomal translation pre-initiation complex which assembles on the 30S ribosome in the order IF-2 and IF-3, IF-1 and N-formylmethionyl-tRNA(fMet); mRNA recruitment can occur at any time during PIC assembly.

Its subcellular location is the cytoplasm. Its function is as follows. One of the essential components for the initiation of protein synthesis. Stabilizes the binding of IF-2 and IF-3 on the 30S subunit to which N-formylmethionyl-tRNA(fMet) subsequently binds. Helps modulate mRNA selection, yielding the 30S pre-initiation complex (PIC). Upon addition of the 50S ribosomal subunit IF-1, IF-2 and IF-3 are released leaving the mature 70S translation initiation complex. The sequence is that of Translation initiation factor IF-1 from Verminephrobacter eiseniae (strain EF01-2).